The sequence spans 418 residues: Serine hydroxymethyltransferase (418 aa).

Residues Leu-121 and Gly-125 to Leu-127 contribute to the (6S)-5,6,7,8-tetrahydrofolate site. N6-(pyridoxal phosphate)lysine is present on Lys-230. Ser-355–Phe-357 serves as a coordination point for (6S)-5,6,7,8-tetrahydrofolate.

This sequence belongs to the SHMT family. In terms of assembly, homodimer. The cofactor is pyridoxal 5'-phosphate.

The protein resides in the cytoplasm. The enzyme catalyses (6R)-5,10-methylene-5,6,7,8-tetrahydrofolate + glycine + H2O = (6S)-5,6,7,8-tetrahydrofolate + L-serine. Its pathway is one-carbon metabolism; tetrahydrofolate interconversion. It functions in the pathway amino-acid biosynthesis; glycine biosynthesis; glycine from L-serine: step 1/1. Functionally, catalyzes the reversible interconversion of serine and glycine with tetrahydrofolate (THF) serving as the one-carbon carrier. This reaction serves as the major source of one-carbon groups required for the biosynthesis of purines, thymidylate, methionine, and other important biomolecules. Also exhibits THF-independent aldolase activity toward beta-hydroxyamino acids, producing glycine and aldehydes, via a retro-aldol mechanism. In Methylococcus capsulatus (strain ATCC 33009 / NCIMB 11132 / Bath), this protein is Serine hydroxymethyltransferase.